A 255-amino-acid chain; its full sequence is 4-hydroxy-tetrahydrodipicolinate reductase (255 aa).

NAD(+)-binding positions include 9 to 14, 89 to 91, and 115 to 118; these read GFKGRM, GTT, and APNF. His-145 (proton donor/acceptor) is an active-site residue. Position 146 (His-146) interacts with (S)-2,3,4,5-tetrahydrodipicolinate. Lys-149 acts as the Proton donor in catalysis. Residue 155–156 coordinates (S)-2,3,4,5-tetrahydrodipicolinate; the sequence is GT.

The protein belongs to the DapB family.

It is found in the cytoplasm. It catalyses the reaction (S)-2,3,4,5-tetrahydrodipicolinate + NAD(+) + H2O = (2S,4S)-4-hydroxy-2,3,4,5-tetrahydrodipicolinate + NADH + H(+). The catalysed reaction is (S)-2,3,4,5-tetrahydrodipicolinate + NADP(+) + H2O = (2S,4S)-4-hydroxy-2,3,4,5-tetrahydrodipicolinate + NADPH + H(+). The protein operates within amino-acid biosynthesis; L-lysine biosynthesis via DAP pathway; (S)-tetrahydrodipicolinate from L-aspartate: step 4/4. Its function is as follows. Catalyzes the conversion of 4-hydroxy-tetrahydrodipicolinate (HTPA) to tetrahydrodipicolinate. This Streptococcus thermophilus (strain CNRZ 1066) protein is 4-hydroxy-tetrahydrodipicolinate reductase.